Here is a 415-residue protein sequence, read N- to C-terminus: F-box protein At3g13820 (415 aa).

The region spanning methionine 1–glutamine 50 is the F-box domain. Disordered regions lie at residues asparagine 209 to aspartate 229 and lysine 387 to glycine 415. Acidic residues predominate over residues aspartate 210–aspartate 229. A compositionally biased stretch (basic residues) spans asparagine 403–glycine 415.

In Arabidopsis thaliana (Mouse-ear cress), this protein is F-box protein At3g13820.